The following is a 166-amino-acid chain: Ribosome maturation factor RimM (166 aa).

The 75-residue stretch at 91-165 (DDEFYHADLI…RIVADPPEGL (75 aa)) folds into the PRC barrel domain.

The protein belongs to the RimM family. Binds ribosomal protein uS19.

It localises to the cytoplasm. Functionally, an accessory protein needed during the final step in the assembly of 30S ribosomal subunit, possibly for assembly of the head region. Essential for efficient processing of 16S rRNA. May be needed both before and after RbfA during the maturation of 16S rRNA. It has affinity for free ribosomal 30S subunits but not for 70S ribosomes. In Dinoroseobacter shibae (strain DSM 16493 / NCIMB 14021 / DFL 12), this protein is Ribosome maturation factor RimM.